We begin with the raw amino-acid sequence, 155 residues long: Small ribosomal subunit protein uS7cz/uS7cy (155 aa).

This sequence belongs to the universal ribosomal protein uS7 family. As to quaternary structure, part of the 30S ribosomal subunit.

The protein localises to the plastid. The protein resides in the chloroplast. Functionally, one of the primary rRNA binding proteins, it binds directly to 16S rRNA where it nucleates assembly of the head domain of the 30S subunit. This is Small ribosomal subunit protein uS7cz/uS7cy (rps7-A) from Vitis vinifera (Grape).